Consider the following 100-residue polypeptide: Urease subunit gamma (100 aa).

It belongs to the urease gamma subunit family. In terms of assembly, heterotrimer of UreA (gamma), UreB (beta) and UreC (alpha) subunits. Three heterotrimers associate to form the active enzyme.

Its subcellular location is the cytoplasm. The enzyme catalyses urea + 2 H2O + H(+) = hydrogencarbonate + 2 NH4(+). It functions in the pathway nitrogen metabolism; urea degradation; CO(2) and NH(3) from urea (urease route): step 1/1. This chain is Urease subunit gamma, found in Staphylococcus saprophyticus subsp. saprophyticus (strain ATCC 15305 / DSM 20229 / NCIMB 8711 / NCTC 7292 / S-41).